The sequence spans 651 residues: MRDSPGSKSSSERWHDTMAVSDPTAEGKDESSAKTSGFWALTLGSVGVVFGDIGTSPLYAFREAVDHAAQEGAVTPAIVLGVLSLILWSLFIVVTAKYVLLLLRADNNGEGGTLSLMALGQRALGRRSLLLLALGVVGASMFIGDSMITPAISVLSAVEGLKLAAPRLQDYVVPLTLVILVMLFAVQSRGTARVASAFAPVMALWFLTIAVLGVLHIHEDPHVLLAVNPWYAIHFLLNHGLLGLVIMGLVFLSVTGGEALYADLGHFGRKPIQVAWFCLVLPSLLLNYFGQGALILAHPEAIENTFYRLAPAPLILPLVILATAATVIASQAVITGAYSLIRQGVQLGLLPRFEVRYTSETHAGQIYLPRVNLLLLIGVLLLVLLFRTSSGLASAYGIAVSTTMVADGIMGFVVVWKLWNWHPAAAAALVVPLVVVDMMFFSANLLKLFDGAWVPLLFGIAMVVLIWTWRRGVAILIKKTRRTEVPLLDLIQSLEKRPPHIVKGTAVFLTSDPNFVPTALLHNLKHNKVLHEHNVILTIETAQTPRVGPAERVRMENISEKFSTVSLRFGFMESPNVPKALAIARKLGWQFDIMSTSFFVSRRSLKASAQSGMPAWQDKLFIALSRSANDAIDYFQIPTGRVVEVGTQVII.

Residues 1 to 16 show a composition bias toward basic and acidic residues; sequence MRDSPGSKSSSERWHD. Positions 1–31 are disordered; sequence MRDSPGSKSSSERWHDTMAVSDPTAEGKDES. 12 helical membrane-spanning segments follow: residues 38-58, 74-94, 129-149, 168-188, 197-217, 232-252, 276-296, 309-329, 366-386, 396-416, 423-443, and 448-468; these read FWAL…TSPL, VTPA…FIVV, LLLL…SMIT, LQDY…AVQS, AFAP…VLHI, AIHF…LVFL, WFCL…ALIL, LAPA…TVIA, IYLP…VLLF, YGIA…VVVW, PAAA…FFSA, and LFDG…LIWT.

The protein belongs to the HAK/KUP transporter (TC 2.A.72) family.

The protein resides in the cell inner membrane. It carries out the reaction K(+)(in) + H(+)(in) = K(+)(out) + H(+)(out). In terms of biological role, transport of potassium into the cell. Likely operates as a K(+):H(+) symporter. In Nitrobacter winogradskyi (strain ATCC 25391 / DSM 10237 / CIP 104748 / NCIMB 11846 / Nb-255), this protein is Probable potassium transport system protein Kup.